The primary structure comprises 724 residues: Tripartite terminase subunit 1 (724 aa).

Residues Cys-175–His-203 form a C3H1-type zinc finger. Residues Gly-410–Ala-445 are disordered. Residues Gly-419–Gly-430 show a composition bias toward gly residues. ATP is bound at residue Phe-652–Gly-659.

It belongs to the herpesviridae TRM1 protein family. In terms of assembly, associates with TRM2 and TRM3 to form the tripartite terminase complex. Interacts with portal protein.

The protein localises to the host nucleus. In terms of biological role, component of the molecular motor that translocates viral genomic DNA in empty capsid during DNA packaging. Forms a tripartite terminase complex together with TRM2 and TRM3 in the host cytoplasm. Once the complex reaches the host nucleus, it interacts with the capsid portal vertex. This portal forms a ring in which genomic DNA is translocated into the capsid. TRM1 carries an endonuclease activity that plays an important role for the cleavage of concatemeric viral DNA into unit length genomes. In Suid herpesvirus 1 (strain Indiana-Funkhauser / Becker) (SuHV-1), this protein is Tripartite terminase subunit 1.